We begin with the raw amino-acid sequence, 312 residues long: Bark storage protein A (312 aa).

The first 24 residues, 1–24 (MPQQSMQASLIDPIAEIERSNCKI), serve as a signal peptide directing secretion. N-linked (GlcNAc...) asparagine glycosylation is present at Asn-70.

To wound-inducible poplar endochitinases. As to quaternary structure, monomer. As to expression, bark.

May play a role in nitrogen storage. The chain is Bark storage protein A (BSPA) from Populus deltoides (Eastern poplar).